The primary structure comprises 89 residues: UPF0223 protein BPUM_1362 (89 aa).

Belongs to the UPF0223 family.

In Bacillus pumilus (strain SAFR-032), this protein is UPF0223 protein BPUM_1362.